Here is a 260-residue protein sequence, read N- to C-terminus: Probable carbohydrate esterase At4g34215 (260 aa).

A disordered region spans residues 1-22 (MEGGSITPGEDKPEIQSPIPPN). Catalysis depends on residues Ser-31, Asp-235, and His-238.

It belongs to the carbohydrate esterase 6 family.

The sequence is that of Probable carbohydrate esterase At4g34215 from Arabidopsis thaliana (Mouse-ear cress).